We begin with the raw amino-acid sequence, 495 residues long: Cysteine--tRNA ligase (495 aa).

Cys29 provides a ligand contact to Zn(2+). The 'HIGH' region motif lies at 31-41 (VTVYDDSHVGH). Residues Cys209, His234, and Glu238 each coordinate Zn(2+). The 'KMSKS' region motif lies at 266–270 (KMSKS). Residue Lys269 participates in ATP binding.

This sequence belongs to the class-I aminoacyl-tRNA synthetase family. Monomer. Requires Zn(2+) as cofactor.

The protein resides in the cytoplasm. It catalyses the reaction tRNA(Cys) + L-cysteine + ATP = L-cysteinyl-tRNA(Cys) + AMP + diphosphate. The protein is Cysteine--tRNA ligase (cysS) of Aquifex aeolicus (strain VF5).